The sequence spans 465 residues: MFIYDTKSKQKVPFEPLVKNKANIYVCGPTVYDDAHLGHARSAIAFDLLRRTLELSGYEVMLVRNFTDIDDKIINKALKENKSIQELSSIYIESYTRDLNALNVKKPSLEPKASEYLDAMVHMIETLLEKNIAYRVSNGDIYLDTSKDKDYGSLSVHNSSIEFGRIGLVQEKRLEQDFVLWKSYKGDNDVGFDSPLGKGRPGWHIECSSMVFETLALANTPYQIDIHAGGSDLLFPHHENEACQTRCAFGVELAKYWMHNGFVNINNEKMSKSLGNSFFVKDALKNYDGEILRNYLLGVHYRSVLNFNEEDLLVSKKRLDKIYRLKQRVLGTLGGINPNFKKEILECMQDDLNVSKALSVLENMLSSTNEKLDQNPKNKALKGEILANLKFVEELLGIGFKDPSAYFQLGVSESEKQEIENKIEERKRAKEQKDFLKADRIREELLNRKIALMDTPQGTIWEKFF.

Position 27 (Cys-27) interacts with Zn(2+). The 'HIGH' region motif lies at 29-39 (PTVYDDAHLGH). Positions 207, 237, and 241 each coordinate Zn(2+). The 'KMSKS' region motif lies at 269 to 273 (KMSKS). Lys-272 is an ATP binding site.

The protein belongs to the class-I aminoacyl-tRNA synthetase family. In terms of assembly, monomer. The cofactor is Zn(2+).

It is found in the cytoplasm. It carries out the reaction tRNA(Cys) + L-cysteine + ATP = L-cysteinyl-tRNA(Cys) + AMP + diphosphate. The polypeptide is Cysteine--tRNA ligase (Helicobacter pylori (strain HPAG1)).